Consider the following 652-residue polypeptide: Acetyl-coenzyme A synthetase (652 aa).

Residues 189–192 (RGGK) and threonine 311 each bind CoA. ATP contacts are provided by residues 387-389 (GEP), 411-416 (DTWWQT), aspartate 500, and arginine 515. Serine 523 provides a ligand contact to CoA. Arginine 526 provides a ligand contact to ATP. The Mg(2+) site is built by valine 537, histidine 539, and valine 542. Residue arginine 584 coordinates CoA. The residue at position 609 (lysine 609) is an N6-acetyllysine.

It belongs to the ATP-dependent AMP-binding enzyme family. Mg(2+) serves as cofactor. Acetylated. Deacetylation by the SIR2-homolog deacetylase activates the enzyme.

It catalyses the reaction acetate + ATP + CoA = acetyl-CoA + AMP + diphosphate. In terms of biological role, catalyzes the conversion of acetate into acetyl-CoA (AcCoA), an essential intermediate at the junction of anabolic and catabolic pathways. AcsA undergoes a two-step reaction. In the first half reaction, AcsA combines acetate with ATP to form acetyl-adenylate (AcAMP) intermediate. In the second half reaction, it can then transfer the acetyl group from AcAMP to the sulfhydryl group of CoA, forming the product AcCoA. The sequence is that of Acetyl-coenzyme A synthetase from Rhizobium rhizogenes (Agrobacterium rhizogenes).